Reading from the N-terminus, the 468-residue chain is MERERLVLKVTALQACIRGFLVRRQFQSLRGEYEAIVQEIEGDLGTLQWTEGWIPRPRFLPKKAKSCQTWKATGERAPNPEQELWSRFACKETEKETIREDMILKKSGESFTNASSLPCRDASAWSQDEQSRRTGKPSQETRDVSRKNDPEAAGPGLFHSQTELQELQNHRSHLAMELLWLQQAINSRKEYLVLKQTLRSPEVNQNRHEPSLCQEHGGQSCEKAGSQPGPPLEDQPYRGRTPGEPGHVDASCWRLRSQAHKFPEGLATPDKITAGAKYRDPSYRWPGPQLPTLSEYQATGKRLTKELDCGEEISGETCLQLTTLLEDESHKELKSKGSCPGKARTQLPTLHKDPNIEDNSPRGPCPKELDWQRAVPQELGVSEDHVTWDGSLAEHGGLDLWKNKPPKGQTPSDKSSIERSPSESSHEGWQNQRAVPFRSRPPEKLSTGSGHTGEDHWRGRQWKTGPAG.

Residues 6–35 (LVLKVTALQACIRGFLVRRQFQSLRGEYEA) form the IQ domain. 3 disordered regions span residues 113 to 157 (NASS…GPGL), 202 to 245 (EVNQ…PGEP), and 329 to 468 (SHKE…GPAG). Residues 139–150 (QETRDVSRKNDP) are compositionally biased toward basic and acidic residues. Positions 415–426 (SSIERSPSESSH) are enriched in basic and acidic residues.

The sequence is that of IQ domain-containing protein C (IQCC) from Bos taurus (Bovine).